A 246-amino-acid chain; its full sequence is MLDQVCQLARNAGDAIMQVYDGTKPMDVVSKADNSPVTAADIAAHTVIMDGLRTLTPDIPVLSEEDPPGWEVRQHWQRYWLVDPLDGTKEFIKRNGEFTVNIALIDHGKPILGVVYAPVMNVMYSAAEGKAWKEECGVRKQIQVRDARPPLVVISRSHADAELKEYLQQLGEHQTTSIGSSLKFCLVAEGQAQLYPRFGPTNIWDTAAGHAVAAAAGAHVHDWQGKPLDYTPRESFLNPGFRVSIY.

Residues Glu64, Asp83, Leu85, Asp86, and Asp205 each contribute to the Mg(2+) site. Residue Glu64 coordinates substrate. Substrate-binding positions include 85 to 88 and Asp205; that span reads LDGT.

The protein belongs to the inositol monophosphatase superfamily. CysQ family. Requires Mg(2+) as cofactor.

It is found in the cell inner membrane. It carries out the reaction adenosine 3',5'-bisphosphate + H2O = AMP + phosphate. In terms of biological role, converts adenosine-3',5'-bisphosphate (PAP) to AMP. The protein is 3'(2'),5'-bisphosphate nucleotidase CysQ of Escherichia coli O6:H1 (strain CFT073 / ATCC 700928 / UPEC).